We begin with the raw amino-acid sequence, 288 residues long: Alpha-acetolactate decarboxylase (288 aa).

The signal sequence occupies residues 1–23 (MNIKYFLIFLILLAVTSFTLFSG).

Belongs to the alpha-acetolactate decarboxylase family.

The catalysed reaction is (2S)-2-acetolactate + H(+) = (R)-acetoin + CO2. Its pathway is polyol metabolism; (R,R)-butane-2,3-diol biosynthesis; (R,R)-butane-2,3-diol from pyruvate: step 2/3. Its function is as follows. Converts acetolactate into acetoin. In Methanosarcina mazei (strain ATCC BAA-159 / DSM 3647 / Goe1 / Go1 / JCM 11833 / OCM 88) (Methanosarcina frisia), this protein is Alpha-acetolactate decarboxylase.